The primary structure comprises 311 residues: Methionyl-tRNA formyltransferase (311 aa).

110 to 113 (SLLP) is a (6S)-5,6,7,8-tetrahydrofolate binding site.

It belongs to the Fmt family.

It catalyses the reaction L-methionyl-tRNA(fMet) + (6R)-10-formyltetrahydrofolate = N-formyl-L-methionyl-tRNA(fMet) + (6S)-5,6,7,8-tetrahydrofolate + H(+). Functionally, attaches a formyl group to the free amino group of methionyl-tRNA(fMet). The formyl group appears to play a dual role in the initiator identity of N-formylmethionyl-tRNA by promoting its recognition by IF2 and preventing the misappropriation of this tRNA by the elongation apparatus. The protein is Methionyl-tRNA formyltransferase of Streptococcus equi subsp. equi (strain 4047).